The primary structure comprises 1127 residues: Disease resistance protein RPS6 (1127 aa).

The residue at position 1 (Met1) is an N-acetylmethionine. A TIR domain is found at 12 to 176 (WSYHVFPSFS…EIANDILGKM (165 aa)). The active site involves Glu87. LRR repeat units lie at residues 197–221 (MSSL…GIGK), 540–563 (IDET…LFLK), 587–609 (PSRL…NFHP), 610–632 (ENLV…VHSL), 633–656 (AGLR…SMAT), 658–679 (LETL…IQYL), 680–704 (NKLN…NLKS), 766–790 (SPTL…IQNL), 791–813 (YQLE…GINL), 814–834 (DSLI…PDIS), and 835–857 (TNIS…IEKL).

As to quaternary structure, interacts with EDS1. Ubiquitous.

It carries out the reaction NAD(+) + H2O = ADP-D-ribose + nicotinamide + H(+). Functionally, disease resistance (R) protein that specifically recognizes the hopA1 type III effector avirulence protein from Pseudomonas syringae. Resistance proteins guard the plant against pathogens that contain an appropriate avirulence protein via an indirect interaction with this avirulence protein. That triggers a defense system including the hypersensitive response, which restricts the pathogen growth. The polypeptide is Disease resistance protein RPS6 (Arabidopsis thaliana (Mouse-ear cress)).